Reading from the N-terminus, the 294-residue chain is Elongation factor Ts (294 aa).

The tract at residues 82–85 (TDFV) is involved in Mg(2+) ion dislocation from EF-Tu.

Belongs to the EF-Ts family.

It is found in the cytoplasm. Associates with the EF-Tu.GDP complex and induces the exchange of GDP to GTP. It remains bound to the aminoacyl-tRNA.EF-Tu.GTP complex up to the GTP hydrolysis stage on the ribosome. The sequence is that of Elongation factor Ts from Psychrobacter arcticus (strain DSM 17307 / VKM B-2377 / 273-4).